Here is a 386-residue protein sequence, read N- to C-terminus: S-adenosylmethionine synthase (386 aa).

Position 16 (histidine 16) interacts with ATP. Aspartate 18 lines the Mg(2+) pocket. Position 44 (glutamate 44) interacts with K(+). The L-methionine site is built by glutamate 57 and glutamine 100. The interval 100 to 110 is flexible loop; sequence QSSDIAQGVDR. ATP is bound by residues 165–167, aspartate 240, 246–247, alanine 263, and lysine 267; these read DAK and RK. An L-methionine-binding site is contributed by aspartate 240. Residue lysine 271 coordinates L-methionine.

Belongs to the AdoMet synthase family. As to quaternary structure, homotetramer; dimer of dimers. Mg(2+) is required as a cofactor. K(+) serves as cofactor.

The protein localises to the cytoplasm. It catalyses the reaction L-methionine + ATP + H2O = S-adenosyl-L-methionine + phosphate + diphosphate. It participates in amino-acid biosynthesis; S-adenosyl-L-methionine biosynthesis; S-adenosyl-L-methionine from L-methionine: step 1/1. Catalyzes the formation of S-adenosylmethionine (AdoMet) from methionine and ATP. The overall synthetic reaction is composed of two sequential steps, AdoMet formation and the subsequent tripolyphosphate hydrolysis which occurs prior to release of AdoMet from the enzyme. The sequence is that of S-adenosylmethionine synthase from Francisella philomiragia subsp. philomiragia (strain ATCC 25017 / CCUG 19701 / FSC 153 / O#319-036).